Consider the following 354-residue polypeptide: tRNA N6-adenosine threonylcarbamoyltransferase (354 aa).

A divalent metal cation contacts are provided by His121, His125, and Tyr142. Residues 142 to 146 (YVSGG), Asp174, Gly189, Glu193, and Asn285 contribute to the substrate site. Asp313 contacts a divalent metal cation.

It belongs to the KAE1 / TsaD family. In terms of assembly, component of the EKC/KEOPS complex composed of at least bud32, cgi121, gon7, kae1 and pcc1; the whole complex dimerizes. A divalent metal cation serves as cofactor.

The protein localises to the cytoplasm. The protein resides in the nucleus. The catalysed reaction is L-threonylcarbamoyladenylate + adenosine(37) in tRNA = N(6)-L-threonylcarbamoyladenosine(37) in tRNA + AMP + H(+). Its function is as follows. Component of the EKC/KEOPS complex that is required for the formation of a threonylcarbamoyl group on adenosine at position 37 (t(6)A37) in tRNAs that read codons beginning with adenine. The complex is probably involved in the transfer of the threonylcarbamoyl moiety of threonylcarbamoyl-AMP (TC-AMP) to the N6 group of A37. Kae1 likely plays a direct catalytic role in this reaction, but requires other protein(s) of the complex to fulfill this activity. The EKC/KEOPS complex also promotes both telomere uncapping and telomere elongation. The complex is required for efficient recruitment of transcriptional coactivators. This is tRNA N6-adenosine threonylcarbamoyltransferase (gpe-1) from Neurospora crassa (strain ATCC 24698 / 74-OR23-1A / CBS 708.71 / DSM 1257 / FGSC 987).